A 64-amino-acid chain; its full sequence is Large ribosomal subunit protein bL35 (64 aa).

Positions 1-41 (MPKMKSHSGASKRFKVSGKGKLLRQQANRRHLLEHKPSRRT) are disordered.

Belongs to the bacterial ribosomal protein bL35 family.

The protein is Large ribosomal subunit protein bL35 of Nocardia farcinica (strain IFM 10152).